The chain runs to 415 residues: Serine hydroxymethyltransferase (415 aa).

(6S)-5,6,7,8-tetrahydrofolate contacts are provided by residues Leu-117 and 121-123; that span reads GHL. Lys-225 bears the N6-(pyridoxal phosphate)lysine mark. 349–351 serves as a coordination point for (6S)-5,6,7,8-tetrahydrofolate; it reads SPF.

It belongs to the SHMT family. In terms of assembly, homodimer. The cofactor is pyridoxal 5'-phosphate.

The protein resides in the cytoplasm. The enzyme catalyses (6R)-5,10-methylene-5,6,7,8-tetrahydrofolate + glycine + H2O = (6S)-5,6,7,8-tetrahydrofolate + L-serine. Its pathway is one-carbon metabolism; tetrahydrofolate interconversion. It participates in amino-acid biosynthesis; glycine biosynthesis; glycine from L-serine: step 1/1. Catalyzes the reversible interconversion of serine and glycine with tetrahydrofolate (THF) serving as the one-carbon carrier. This reaction serves as the major source of one-carbon groups required for the biosynthesis of purines, thymidylate, methionine, and other important biomolecules. Also exhibits THF-independent aldolase activity toward beta-hydroxyamino acids, producing glycine and aldehydes, via a retro-aldol mechanism. The polypeptide is Serine hydroxymethyltransferase (Nitratiruptor sp. (strain SB155-2)).